Here is a 594-residue protein sequence, read N- to C-terminus: UvrABC system protein C (594 aa).

The region spanning 15–92 (DKPGCYQMKN…IQKFQPYYNI (78 aa)) is the GIY-YIG domain. The UVR domain maps to 197-232 (AKIKQSLQTKMQKASEAMEFERAADIRDQIHYIEVT).

It belongs to the UvrC family. In terms of assembly, interacts with UvrB in an incision complex.

The protein resides in the cytoplasm. In terms of biological role, the UvrABC repair system catalyzes the recognition and processing of DNA lesions. UvrC both incises the 5' and 3' sides of the lesion. The N-terminal half is responsible for the 3' incision and the C-terminal half is responsible for the 5' incision. This is UvrABC system protein C from Pediococcus pentosaceus (strain ATCC 25745 / CCUG 21536 / LMG 10740 / 183-1w).